A 491-amino-acid polypeptide reads, in one-letter code: MDSVSTAILLLLLALICLLLTLSSRDKGKLPPGPRPLPLLGNLLLLRSQDMLTSLTKLSKEYGSMYTVHLGPRRVVVLSGYQAVKEALVDQGEEFSGRRDFPAFFNFTKGNGIAFSNGDRWKVLRRFSIQILRNFGMGKRSIEERILEEGSFLLAELRKTEGEPFDPTFVLSRSVSNIICSVLFGSRFDYDDERLLTIIRHINDNFQIMSSPWGELYDIFPSLLDWVPGPHQRIFQNFKCLRDLIAHSVHDHQASLDPRSPRDFIDCFLTKMAEENEDPLSHFHMDTLLMTTHNLLFGGTETVGTTLRYAFLALMKYPKVQARVQEEIDLVVGRARLPALKDRAAMPYTDAVIHEVQRFADIIPMSLPHRVTRDTAFRGFLIPKGTDIITLLNTVHYDPSQFLTPQEFNPEHFLDANQSFKKSPAFMPFSAGRRLCLGESLARMELFLYLTAILQSFSLQPLGAPKDIDLTPLSSGLGNLPRPFQLCLRPR.

Cys436 serves as a coordination point for heme.

Belongs to the cytochrome P450 family. Heme is required as a cofactor.

The protein resides in the endoplasmic reticulum membrane. Its subcellular location is the microsome membrane. The catalysed reaction is an organic molecule + reduced [NADPH--hemoprotein reductase] + O2 = an alcohol + oxidized [NADPH--hemoprotein reductase] + H2O + H(+). Its function is as follows. Cytochromes P450 are a group of heme-thiolate monooxygenases. In liver microsomes, this enzyme is involved in an NADPH-dependent electron transport pathway. It oxidizes a variety of structurally unrelated compounds, including steroids, fatty acids, and xenobiotics. The polypeptide is Cytochrome P450 2F5 (CYP2F5) (Gorilla gorilla gorilla (Western lowland gorilla)).